Reading from the N-terminus, the 264-residue chain is Apolipoprotein A-I (264 aa).

The first 18 residues, 1 to 18 (MKAVVLTVAVLFLTGSQA), serve as a signal peptide directing secretion. 2 repeat units span residues 67 to 88 (LKLLDNWDTLGSSISKLREQLG) and 89 to 110 (PVTQEFWDNLEKDTEWLRQEMN). The interval 67 to 264 (LKLLDNWDTL…DDAAKKLSSQ (198 aa)) is 10 X approximate tandem repeats. Met109 is modified (methionine sulfoxide). A 3; half-length repeat occupies 111–121 (KDLEEVKQKVQ). 3 repeat units span residues 122–143 (PYLEEFQKKWQEEVERYRQKVE), 144–165 (PLSTELREGARQKLQELQEKLT), and 166–187 (PLGEELRDHARTHVDVLRTQLA). The 7; truncated repeat unit spans residues 188–207 (PYSDKMRERLAERLTALKDS). Met193 is modified (methionine sulfoxide). Repeat 8 spans residues 208–229 (ASFAEYHAKASEHLKTLREKAK). Residues 230-240 (PAIEDLGQGLL) form a 9; half-length repeat. Residues 241–264 (PVLENLKASFLSAIDDAAKKLSSQ) form repeat 10.

It belongs to the apolipoprotein A1/A4/E family. As to quaternary structure, homodimer. Interacts with APOA1BP and CLU. Component of a sperm activating protein complex (SPAP), consisting of APOA1, an immunoglobulin heavy chain, an immunoglobulin light chain and albumin. Interacts with NDRG1. Interacts with SCGB3A2. Interacts with NAXE and YJEFN3. In terms of processing, glycosylated. Post-translationally, palmitoylated. Phosphorylation sites are present in the extracellular medium.

Its subcellular location is the secreted. Functionally, participates in the reverse transport of cholesterol from tissues to the liver for excretion by promoting cholesterol efflux from tissues and by acting as a cofactor for the lecithin cholesterol acyltransferase (LCAT). As part of the SPAP complex, activates spermatozoa motility. This chain is Apolipoprotein A-I (APOA1), found in Castor canadensis (American beaver).